Consider the following 460-residue polypeptide: Bifunctional protein GlmU (460 aa).

A pyrophosphorylase region spans residues 1–235 (MALSAAIILA…PLSVEGVNDR (235 aa)). UDP-N-acetyl-alpha-D-glucosamine is bound by residues 9–12 (LAAG), Lys23, Gln76, and 81–82 (GT). Asp109 is a Mg(2+) binding site. UDP-N-acetyl-alpha-D-glucosamine contacts are provided by Gly146, Glu161, Asn176, and Asn233. Asn233 is a Mg(2+) binding site. Residues 236–256 (VQLAALAKAHNKRVCEHWMRE) form a linker region. The N-acetyltransferase stretch occupies residues 257 to 460 (GVTILDPDTT…VEGWKPEWER (204 aa)). Residues Arg338 and Lys356 each contribute to the UDP-N-acetyl-alpha-D-glucosamine site. His368 serves as the catalytic Proton acceptor. The UDP-N-acetyl-alpha-D-glucosamine site is built by Tyr371 and Asn382. Residues 391–392 (NY) and Ala428 contribute to the acetyl-CoA site.

In the N-terminal section; belongs to the N-acetylglucosamine-1-phosphate uridyltransferase family. The protein in the C-terminal section; belongs to the transferase hexapeptide repeat family. Homotrimer. The cofactor is Mg(2+).

The protein resides in the cytoplasm. The enzyme catalyses alpha-D-glucosamine 1-phosphate + acetyl-CoA = N-acetyl-alpha-D-glucosamine 1-phosphate + CoA + H(+). The catalysed reaction is N-acetyl-alpha-D-glucosamine 1-phosphate + UTP + H(+) = UDP-N-acetyl-alpha-D-glucosamine + diphosphate. The protein operates within nucleotide-sugar biosynthesis; UDP-N-acetyl-alpha-D-glucosamine biosynthesis; N-acetyl-alpha-D-glucosamine 1-phosphate from alpha-D-glucosamine 6-phosphate (route II): step 2/2. It functions in the pathway nucleotide-sugar biosynthesis; UDP-N-acetyl-alpha-D-glucosamine biosynthesis; UDP-N-acetyl-alpha-D-glucosamine from N-acetyl-alpha-D-glucosamine 1-phosphate: step 1/1. Its pathway is bacterial outer membrane biogenesis; LPS lipid A biosynthesis. Functionally, catalyzes the last two sequential reactions in the de novo biosynthetic pathway for UDP-N-acetylglucosamine (UDP-GlcNAc). The C-terminal domain catalyzes the transfer of acetyl group from acetyl coenzyme A to glucosamine-1-phosphate (GlcN-1-P) to produce N-acetylglucosamine-1-phosphate (GlcNAc-1-P), which is converted into UDP-GlcNAc by the transfer of uridine 5-monophosphate (from uridine 5-triphosphate), a reaction catalyzed by the N-terminal domain. The chain is Bifunctional protein GlmU from Bifidobacterium adolescentis (strain ATCC 15703 / DSM 20083 / NCTC 11814 / E194a).